Reading from the N-terminus, the 381-residue chain is Peptidoglycan glycosyltransferase MrdB (381 aa).

Helical transmembrane passes span 11–31 (FDLL…LLIF), 40–60 (KQGV…FIPF), 66–86 (WLFV…FMGY), 99–119 (FISI…LLLA), 132–152 (YDWG…ALIL), 156–176 (DLGT…IVGL), 180–200 (VWLP…HFLH), 263–283 (FGFL…LHLF), 297–317 (IVAL…IAMT), and 328–348 (LPLF…FGIL).

The protein belongs to the SEDS family. MrdB/RodA subfamily.

It is found in the cell inner membrane. It carries out the reaction [GlcNAc-(1-&gt;4)-Mur2Ac(oyl-L-Ala-gamma-D-Glu-L-Lys-D-Ala-D-Ala)](n)-di-trans,octa-cis-undecaprenyl diphosphate + beta-D-GlcNAc-(1-&gt;4)-Mur2Ac(oyl-L-Ala-gamma-D-Glu-L-Lys-D-Ala-D-Ala)-di-trans,octa-cis-undecaprenyl diphosphate = [GlcNAc-(1-&gt;4)-Mur2Ac(oyl-L-Ala-gamma-D-Glu-L-Lys-D-Ala-D-Ala)](n+1)-di-trans,octa-cis-undecaprenyl diphosphate + di-trans,octa-cis-undecaprenyl diphosphate + H(+). It functions in the pathway cell wall biogenesis; peptidoglycan biosynthesis. Functionally, peptidoglycan polymerase that is essential for cell wall elongation. This Helicobacter pylori (strain ATCC 700392 / 26695) (Campylobacter pylori) protein is Peptidoglycan glycosyltransferase MrdB.